A 326-amino-acid chain; its full sequence is Chitinase 12 (326 aa).

The signal sequence occupies residues 1–21 (MRALAVVAMVATAFLAAAVHA). In terms of domain architecture, Chitin-binding type-1 spans 22 to 62 (EQCGSQAGGAVCPNCLCCSQFGWCGSTSDYCGAGCQSQCSA). 8 cysteine pairs are disulfide-bonded: C24–C39, C33–C45, C36–C65, C38–C52, C56–C60, C102–C165, C179–C187, and C286–C318. E147 acts as the Proton donor in catalysis.

It belongs to the glycosyl hydrolase 19 family. Chitinase class I subfamily. Expressed in meristems and at lower levels in roots and sheaths.

The enzyme catalyses Random endo-hydrolysis of N-acetyl-beta-D-glucosaminide (1-&gt;4)-beta-linkages in chitin and chitodextrins.. Functionally, hydrolyzes chitin and plays a role in defense against fungal pathogens containing chitin. Its overexpression confers enhanced resistance to sheath blight pathogen (R.solani). This Oryza sativa subsp. japonica (Rice) protein is Chitinase 12 (Cht12).